We begin with the raw amino-acid sequence, 282 residues long: Probable septum site-determining protein MinC (282 aa).

The tract at residues 103–147 (SQSRRGGKDEAPKEKAGKPEATAASGQTDAEAAGNTGKGKDSEGA) is disordered. A compositionally biased stretch (basic and acidic residues) spans 104–120 (QSRRGGKDEAPKEKAGK).

Belongs to the MinC family. In terms of assembly, interacts with MinD and FtsZ.

Its function is as follows. Cell division inhibitor that blocks the formation of polar Z ring septums. Rapidly oscillates between the poles of the cell to destabilize FtsZ filaments that have formed before they mature into polar Z rings. Prevents FtsZ polymerization. This is Probable septum site-determining protein MinC from Cupriavidus metallidurans (strain ATCC 43123 / DSM 2839 / NBRC 102507 / CH34) (Ralstonia metallidurans).